The sequence spans 354 residues: Protein CbrA (354 aa).

The protein belongs to the CbrA family.

The sequence is that of Protein CbrA (cbrA) from Escherichia coli (strain K12).